The chain runs to 145 residues: Salt stress-induced protein (145 aa).

Residues 3–145 enclose the Jacalin-type lectin domain; it reads LVKIGLWGGN…IDAIGIYVHP (143 aa). 2 repeat units span residues 6–15 and 54–64. The 2 X approximate repeats, Gly-rich stretch occupies residues 6-64; sequence IGLWGGNGGSAQDISVPPKKLLGVTIYSSDAIRSIAFNYIGVDGQEYAIGPWGGGEGTS.

In terms of tissue distribution, sheaths and roots from mature plants and seedlings.

The protein is Salt stress-induced protein (SALT) of Oryza sativa subsp. indica (Rice).